We begin with the raw amino-acid sequence, 170 residues long: Large ribosomal subunit protein uL10 (170 aa).

Belongs to the universal ribosomal protein uL10 family. Part of the ribosomal stalk of the 50S ribosomal subunit. The N-terminus interacts with L11 and the large rRNA to form the base of the stalk. The C-terminus forms an elongated spine to which L12 dimers bind in a sequential fashion forming a multimeric L10(L12)X complex.

In terms of biological role, forms part of the ribosomal stalk, playing a central role in the interaction of the ribosome with GTP-bound translation factors. In Novosphingobium aromaticivorans (strain ATCC 700278 / DSM 12444 / CCUG 56034 / CIP 105152 / NBRC 16084 / F199), this protein is Large ribosomal subunit protein uL10.